Here is a 278-residue protein sequence, read N- to C-terminus: tRNA (guanine-N(7)-)-methyltransferase (278 aa).

S-adenosyl-L-methionine-binding positions include G63, 86–87, 119–120, and L139; these read EL and NA. Residue D142 is part of the active site. Position 217–219 (217–219) interacts with S-adenosyl-L-methionine; the sequence is TEE. Residues 259–278 are disordered; sequence IDSTTTTTTSTATITEVESK. The segment covering 261–278 has biased composition (low complexity); sequence STTTTTTSTATITEVESK.

This sequence belongs to the class I-like SAM-binding methyltransferase superfamily. TrmB family.

The protein localises to the nucleus. The enzyme catalyses guanosine(46) in tRNA + S-adenosyl-L-methionine = N(7)-methylguanosine(46) in tRNA + S-adenosyl-L-homocysteine. The protein operates within tRNA modification; N(7)-methylguanine-tRNA biosynthesis. Functionally, catalyzes the formation of N(7)-methylguanine at position 46 (m7G46) in tRNA. This Dictyostelium discoideum (Social amoeba) protein is tRNA (guanine-N(7)-)-methyltransferase (mettl1).